The chain runs to 313 residues: Ribosomal RNA small subunit methyltransferase H (313 aa).

S-adenosyl-L-methionine is bound by residues 35–37 (GGH), aspartate 55, phenylalanine 79, aspartate 100, and glutamine 107.

The protein belongs to the methyltransferase superfamily. RsmH family.

It is found in the cytoplasm. It carries out the reaction cytidine(1402) in 16S rRNA + S-adenosyl-L-methionine = N(4)-methylcytidine(1402) in 16S rRNA + S-adenosyl-L-homocysteine + H(+). Specifically methylates the N4 position of cytidine in position 1402 (C1402) of 16S rRNA. In Burkholderia orbicola (strain MC0-3), this protein is Ribosomal RNA small subunit methyltransferase H.